The primary structure comprises 789 residues: LPS-assembly protein LptD (789 aa).

Positions 1–39 (MPPRQLSQTTPSCAVVPRKRRLVAALIAVPGLMPALAHA) are cleaved as a signal peptide.

This sequence belongs to the LptD family. Component of the lipopolysaccharide transport and assembly complex. Interacts with LptE and LptA.

The protein resides in the cell outer membrane. Together with LptE, is involved in the assembly of lipopolysaccharide (LPS) at the surface of the outer membrane. This is LPS-assembly protein LptD from Paraburkholderia xenovorans (strain LB400).